The following is a 209-amino-acid chain: Small ribosomal subunit protein uS4 (209 aa).

Positions 98–161 constitute an S4 RNA-binding domain; that stretch reads TRLDNVVYRM…AKQLRVQEAL (64 aa).

It belongs to the universal ribosomal protein uS4 family. As to quaternary structure, part of the 30S ribosomal subunit. Contacts protein S5. The interaction surface between S4 and S5 is involved in control of translational fidelity.

In terms of biological role, one of the primary rRNA binding proteins, it binds directly to 16S rRNA where it nucleates assembly of the body of the 30S subunit. With S5 and S12 plays an important role in translational accuracy. This Stenotrophomonas maltophilia (strain R551-3) protein is Small ribosomal subunit protein uS4.